Reading from the N-terminus, the 131-residue chain is ATP synthase epsilon chain (131 aa).

It belongs to the ATPase epsilon chain family. As to quaternary structure, F-type ATPases have 2 components, CF(1) - the catalytic core - and CF(0) - the membrane proton channel. CF(1) has five subunits: alpha(3), beta(3), gamma(1), delta(1), epsilon(1). CF(0) has three main subunits: a, b and c.

Its subcellular location is the cell membrane. In terms of biological role, produces ATP from ADP in the presence of a proton gradient across the membrane. The chain is ATP synthase epsilon chain from Bacillus pumilus (strain SAFR-032).